We begin with the raw amino-acid sequence, 226 residues long: Transcription factor bHLH115 (226 aa).

Residues 66–117 (TGSNSKACREKQRRDRLNDKFTELSSVLEPGRTPKTDKVAIINDAIRMVNQA) form the bHLH domain.

Homodimer. Interacts with BTS and BHLH47/PYE.

It localises to the nucleus. This is Transcription factor bHLH115 (BHLH115) from Arabidopsis thaliana (Mouse-ear cress).